We begin with the raw amino-acid sequence, 167 residues long: Pathogenesis-related protein PR-1 type (167 aa).

The signal sequence occupies residues 1-29; that stretch reads MAHNHWCNLFSVALVCVVALVMVQYSVAQ. The SCP domain maps to 36–155; that stretch reads VDAHNAARSA…NGAWFITCNY (120 aa). 3 disulfides stabilise this stretch: Cys-72–Cys-144, Cys-117–Cys-123, and Cys-139–Cys-153.

It belongs to the CRISP family.

In terms of biological role, probably involved in the defense reaction of plants against pathogens. The protein is Pathogenesis-related protein PR-1 type of Sambucus nigra (European elder).